Here is a 311-residue protein sequence, read N- to C-terminus: 4-diphosphocytidyl-2-C-methyl-D-erythritol kinase (311 aa).

Lys-16 is a catalytic residue. Position 100–110 (100–110 (PIGAGLAGGSS)) interacts with ATP. Asp-142 is a catalytic residue.

The protein belongs to the GHMP kinase family. IspE subfamily.

The catalysed reaction is 4-CDP-2-C-methyl-D-erythritol + ATP = 4-CDP-2-C-methyl-D-erythritol 2-phosphate + ADP + H(+). Its pathway is isoprenoid biosynthesis; isopentenyl diphosphate biosynthesis via DXP pathway; isopentenyl diphosphate from 1-deoxy-D-xylulose 5-phosphate: step 3/6. In terms of biological role, catalyzes the phosphorylation of the position 2 hydroxy group of 4-diphosphocytidyl-2C-methyl-D-erythritol. In Prochlorococcus marinus (strain MIT 9215), this protein is 4-diphosphocytidyl-2-C-methyl-D-erythritol kinase.